A 263-amino-acid polypeptide reads, in one-letter code: 5'-nucleotidase SurE (263 aa).

Asp21, Asp22, Ser52, and Asn105 together coordinate a divalent metal cation.

The protein belongs to the SurE nucleotidase family. It depends on a divalent metal cation as a cofactor.

It is found in the cytoplasm. The enzyme catalyses a ribonucleoside 5'-phosphate + H2O = a ribonucleoside + phosphate. In terms of biological role, nucleotidase that shows phosphatase activity on nucleoside 5'-monophosphates. In Vibrio cholerae serotype O1 (strain ATCC 39541 / Classical Ogawa 395 / O395), this protein is 5'-nucleotidase SurE.